A 187-amino-acid polypeptide reads, in one-letter code: Guanylate kinase (187 aa).

S2 is subject to N-acetylserine. Positions 2-184 (SRPIVISGPS…AYKELKDFIF (183 aa)) constitute a Guanylate kinase-like domain. ATP is bound at residue 9-16 (GPSGTGKS). Residues S35, 39–42 (RTPR), Y51, E70, 79–81 (YGS), and D101 contribute to the GMP site. S149 bears the Phosphoserine mark. Y157 is modified (phosphotyrosine).

Belongs to the guanylate kinase family. Monomer.

It catalyses the reaction GMP + ATP = GDP + ADP. Its function is as follows. Catalyzes the reversible transfer of the terminal phosphoryl group of ATP to the acceptor molecule GMP. Essential for recycling GMP and indirectly, cGMP. The polypeptide is Guanylate kinase (GUK1) (Saccharomyces cerevisiae (strain ATCC 204508 / S288c) (Baker's yeast)).